The following is a 31-amino-acid chain: Cytochrome b6-f complex subunit 6 (31 aa).

Residues 4–24 (LTSYFGFLLAALTITFVLFIG) form a helical membrane-spanning segment.

This sequence belongs to the PetL family. As to quaternary structure, the 4 large subunits of the cytochrome b6-f complex are cytochrome b6, subunit IV (17 kDa polypeptide, PetD), cytochrome f and the Rieske protein, while the 4 small subunits are PetG, PetL, PetM and PetN. The complex functions as a dimer.

It is found in the plastid. The protein resides in the chloroplast thylakoid membrane. Its function is as follows. Component of the cytochrome b6-f complex, which mediates electron transfer between photosystem II (PSII) and photosystem I (PSI), cyclic electron flow around PSI, and state transitions. PetL is important for photoautotrophic growth as well as for electron transfer efficiency and stability of the cytochrome b6-f complex. The chain is Cytochrome b6-f complex subunit 6 from Oxybasis rubra (Red goosefoot).